The chain runs to 296 residues: 4-hydroxy-tetrahydrodipicolinate synthase (296 aa).

Thr49 lines the pyruvate pocket. Tyr137 (proton donor/acceptor) is an active-site residue. The active-site Schiff-base intermediate with substrate is the Lys166. Val208 provides a ligand contact to pyruvate.

It belongs to the DapA family. In terms of assembly, homotetramer; dimer of dimers.

Its subcellular location is the cytoplasm. The catalysed reaction is L-aspartate 4-semialdehyde + pyruvate = (2S,4S)-4-hydroxy-2,3,4,5-tetrahydrodipicolinate + H2O + H(+). The protein operates within amino-acid biosynthesis; L-lysine biosynthesis via DAP pathway; (S)-tetrahydrodipicolinate from L-aspartate: step 3/4. Its function is as follows. Catalyzes the condensation of (S)-aspartate-beta-semialdehyde [(S)-ASA] and pyruvate to 4-hydroxy-tetrahydrodipicolinate (HTPA). In Desulforamulus reducens (strain ATCC BAA-1160 / DSM 100696 / MI-1) (Desulfotomaculum reducens), this protein is 4-hydroxy-tetrahydrodipicolinate synthase.